The primary structure comprises 128 residues: Protein C10 (128 aa).

This sequence belongs to the UPF0456 family.

The protein resides in the cytoplasm. The polypeptide is Protein C10 (Xenopus tropicalis (Western clawed frog)).